Here is a 1011-residue protein sequence, read N- to C-terminus: Vacuolar membrane protease (1011 aa).

Over 1 to 14 (MKLTKAVFRFRRTN) the chain is Cytoplasmic. Residues 15 to 35 (LSTLLVITYLVITTLYVWDHF) traverse the membrane as a helical segment. Over 36–352 (RYHFTLPSDY…WFVVWSARSL (317 aa)) the chain is Vacuolar. Residues histidine 149, aspartate 161, glutamate 194, glutamate 219, and histidine 293 each contribute to the Zn(2+) site. A helical transmembrane segment spans residues 353 to 373 (FYWNCIILALFPSILAILFLV). Residues 374 to 390 (AYDMQLLKFNFWDAMLR) lie on the Cytoplasmic side of the membrane. The chain crosses the membrane as a helical span at residues 391-411 (LPVSVCLAYFCVKLFQVLVGQ). At 412 to 420 (LNPYVFSRD) the chain is on the vacuolar side. Residues 421–441 (YVSPILAEASMFIFMNYVILS) traverse the membrane as a helical segment. The Cytoplasmic portion of the chain corresponds to 442 to 451 (SWERLRPLRD). Residues 452-472 (FKTVALVEVSMVLWIYLISVT) traverse the membrane as a helical segment. The Vacuolar segment spans residues 473–487 (RWLRDSDYTATGLYP). Residues 488–508 (FTIGYTFVSIGAIIGVFCATF) traverse the membrane as a helical segment. The Cytoplasmic portion of the chain corresponds to 509–647 (KAKLNPEDDS…SILNYDWSIQ (139 aa)). Positions 534–585 (MQHQYQQHSQKHSNQHSPHHSTHHSAQHSVHHSPRQSIHQVPSSEQRQRDAS) are disordered. Positions 542–567 (SQKHSNQHSPHHSTHHSAQHSVHHSP) are enriched in basic residues. The span at 568–578 (RQSIHQVPSSE) shows a compositional bias: polar residues. Residues 648–668 (FMVVTPWVTYFTWICLDLIMG) form a helical membrane-spanning segment. Residues 669–681 (AMNQTIQESAKGT) lie on the Vacuolar side of the membrane. Residue asparagine 671 is glycosylated (N-linked (GlcNAc...) asparagine). A helical membrane pass occupies residues 682 to 702 (TFVTHMALIGSLLLSLPMLPF). Residues 703–708 (TYKLHS) are Cytoplasmic-facing. The helical transmembrane segment at 709 to 729 (FAGMLFLLLAVTTAVWTIVAP) threads the bilayer. Over 730–1011 (PFTESSPLKL…MVSVTKYVEL (282 aa)) the chain is Vacuolar. 3 N-linked (GlcNAc...) asparagine glycosylation sites follow: asparagine 751, asparagine 825, and asparagine 854.

Belongs to the peptidase M28 family. Zn(2+) serves as cofactor.

It localises to the vacuole membrane. In terms of biological role, may be involved in vacuolar sorting and osmoregulation. The chain is Vacuolar membrane protease from Eremothecium gossypii (strain ATCC 10895 / CBS 109.51 / FGSC 9923 / NRRL Y-1056) (Yeast).